The primary structure comprises 125 residues: Small ribosomal subunit protein bS6 (125 aa).

The protein belongs to the bacterial ribosomal protein bS6 family.

Functionally, binds together with bS18 to 16S ribosomal RNA. The protein is Small ribosomal subunit protein bS6 (rpsF) of Pasteurella multocida (strain Pm70).